The primary structure comprises 664 residues: Cyclic nucleotide-gated channel alpha-2 (664 aa).

A compositionally biased stretch (polar residues) spans 1-20 (MTEKSNGVKSSPANNHNNHV). The interval 1–49 (MTEKSNGVKSSPANNHNNHVPATIKANGKDESRTRSRPQSAADDDTSSE) is disordered. The Cytoplasmic portion of the chain corresponds to 1–144 (MTEKSNGVKS…PAGDWYYRWL (144 aa)). The chain crosses the membrane as a helical span at residues 145-166 (FVIAMPVLYNWCLLVARACFSD). Over 167-176 (LQRGYFLVWL) the chain is Extracellular. The chain crosses the membrane as a helical span at residues 177–197 (VLDYFSDVVYIADLFIRLRTG). Topologically, residues 198-222 (FLEQGLLVKDPKKLRDNYIHTLQFK) are cytoplasmic. Residues 223–241 (LDVASIIPTDLIYFAVGIH) form a helical membrane-spanning segment. Topologically, residues 242 to 246 (NPELR) are extracellular. The chain crosses the membrane as a helical span at residues 247 to 265 (FNRLLHFARMFEFFDRTET). Topologically, residues 266-272 (RTSYPNI) are cytoplasmic. The interval 270–378 (PNIFRISNLV…GNVGSMISNM (109 aa)) is ion conduction pathway. Residues 273 to 296 (FRISNLVLYILVIIHWNACIYYAI) traverse the membrane as a helical segment. The Extracellular portion of the chain corresponds to 297–319 (SKSIGFGVDTWVYPNITDPEYGY). The next 2 helical transmembrane spans lie at 320-354 (LAREYIYCLYWSTLTLTTIGETPPPVKDEEYLFVI) and 355-379 (FDFLIGVLIFATIVGNVGSMISNMN). Residues 337–340 (TIGE) are selectivity filter. A C-linker region spans residues 380–456 (ATRAEFQAKI…STLKKVRIFQ (77 aa)). Over 380-664 (ATRAEFQAKI…SPEPAAAEQP (285 aa)) the chain is Cytoplasmic. Positions 460–580 (AGLLVELVLK…EERGREILMK (121 aa)) are cyclic nucleotide-binding domain. 4 residues coordinate 3',5'-cyclic GMP: Gly520, Ser523, Arg536, and Thr537. 2 residues coordinate 3',5'-cyclic AMP: Arg536 and Thr537. The stretch at 597–651 (VQEKLKQLETNMETLYTRFGRLLAEYTGAQQKLKQRITVLEVKMKQNTEDDYLSD) forms a coiled coil. A disordered region spans residues 644–664 (TEDDYLSDGMNSPEPAAAEQP).

The protein belongs to the cyclic nucleotide-gated cation channel (TC 1.A.1.5) family. CNGA2 subfamily. The olfactory cyclic nucleotide-gated channel is an heterotetramer composed of CNGA2, CNGA4 and CNGB1b subunits with 2:1:1 stoichiometry.

It is found in the cell projection. The protein localises to the cilium membrane. The enzyme catalyses Ca(2+)(in) = Ca(2+)(out). It catalyses the reaction Na(+)(in) = Na(+)(out). It carries out the reaction K(+)(in) = K(+)(out). The catalysed reaction is NH4(+)(in) = NH4(+)(out). The enzyme catalyses Rb(+)(in) = Rb(+)(out). It catalyses the reaction Li(+)(in) = Li(+)(out). It carries out the reaction Cs(+)(in) = Cs(+)(out). In terms of biological role, pore-forming subunit of the olfactory cyclic nucleotide-gated channel. Operates in the cilia of olfactory sensory neurons where chemical stimulation of the odorant is converted to an electrical signal. Mediates odorant-induced cAMP-dependent Ca(2+) influx triggering neuron depolarization. The rise of intracellular Ca(2+) levels potentiates the olfactory response by activating Ca(2+)-dependent Cl(-) channels, but it also serves as a negative feedback signal to desensitize the channel for rapid adaptation to odorants. Conducts cAMP- and cGMP-gated ion currents, with permeability for monovalent and divalent cations. This chain is Cyclic nucleotide-gated channel alpha-2, found in Oryctolagus cuniculus (Rabbit).